Consider the following 491-residue polypeptide: Fatty acyl-CoA reductase 1 (491 aa).

It belongs to the fatty acyl-CoA reductase family. As to expression, expressed in the endodermal cell layer surrounding the central vasculature in roots. Expressed in the hilum region of seeds. Expressed in lateral root tips, cotyledons, the shoot apex, young leaves, petals, stamen filaments, and receptacle of siliques.

The enzyme catalyses a long-chain fatty acyl-CoA + 2 NADPH + 2 H(+) = a long-chain primary fatty alcohol + 2 NADP(+) + CoA. Functionally, catalyzes the reduction of fatty acyl-CoA to fatty alcohols. Catalyzes specifically the formation of C18:0 and C22:0 fatty alcohols. Provides the fatty alcohols required for synthesis of suberin in roots, seed coat and wound-induced leaf tissue. Provides the fatty alcohols required for synthesis of alkyl hydroxycinnamates in root waxes. The sequence is that of Fatty acyl-CoA reductase 1 from Arabidopsis thaliana (Mouse-ear cress).